The primary structure comprises 696 residues: MKWSAAAGAALLALPANSAVTASLPLKLETRSSLNSRLSNIHVERSASVEGAISYTYGSCQAKREEEAHHSISQPTDAHHDRLVWVIPENVQSGGCISAWSRANGRLVGRSRPQSFDFKSIKMRRDLKARATKPSDSVAIHMTTDNGINPWGPWFDGVKLLEDKEISTVDVEKAKSKNIAIVGAGMSGLMTYLCLTQAGMTNVSIIEGGNRLGGRVHTEYLSGGPFDYSYQEMGPMRFPNTITLGNETYNVSDHQLVFQLAEEMNSLNGHSKNLSVDFIPWYQSNSNGLYYYDGIKNPETGLPPTLAELAANSSLALTRVSNNSTKSLSQKVDAFLPDTDKFFAEMAQNMFKAHADWLSGGLAGLPGDQWSEFGFMVNYLRGSLNDTAFLSASAHSYWDTLYEGMYFSASTWKTIDGGLNRLPLSFHPLVDNATTLNRRVERVAFDAETQKVTLHSRNSYKDSFESSEHDYAVIAAPFSIVKKWRFSPALDLTAPTLANAIQNLEYTSACKVALEFRTRFWEHLPQPIYGSCSTTSDIPGIGSICYPSYNINGTDGPASILASYISGADWGDRWVSTPEEEHVQYVLNAMAEIHGEELVKEQYTGQFNRRCWALDPLESASWASPTVGQHELYLPEYFQTRNNLVFVGEHTSYTHAWIASALESGIRGSVQLLLELGLVDEAKATVDKWMARWIDV.

Positions 1 to 130 are excised as a propeptide; sequence MKWSAAAGAA…IKMRRDLKAR (130 aa). Residues E207, R215, 236 to 237, and V440 each bind FAD; that span reads MR. A substrate-binding site is contributed by R237. Y564 contributes to the substrate binding site. FAD is bound by residues E649 and 658–661; that span reads IASA.

Belongs to the flavin monoamine oxidase family. FAD serves as cofactor.

It carries out the reaction an L-alpha-amino acid + O2 + H2O = a 2-oxocarboxylate + H2O2 + NH4(+). This chain is L-amino-acid oxidase (lox), found in Neurospora crassa (strain ATCC 24698 / 74-OR23-1A / CBS 708.71 / DSM 1257 / FGSC 987).